Reading from the N-terminus, the 306-residue chain is Phosphatidylserine decarboxylase proenzyme (306 aa).

Active-site charge relay system; for autoendoproteolytic cleavage activity residues include Asp98, His155, and Ser259. Ser259 functions as the Schiff-base intermediate with substrate; via pyruvic acid; for decarboxylase activity in the catalytic mechanism. Ser259 carries the post-translational modification Pyruvic acid (Ser); by autocatalysis.

The protein belongs to the phosphatidylserine decarboxylase family. PSD-B subfamily. Prokaryotic type I sub-subfamily. Heterodimer of a large membrane-associated beta subunit and a small pyruvoyl-containing alpha subunit. Pyruvate is required as a cofactor. Is synthesized initially as an inactive proenzyme. Formation of the active enzyme involves a self-maturation process in which the active site pyruvoyl group is generated from an internal serine residue via an autocatalytic post-translational modification. Two non-identical subunits are generated from the proenzyme in this reaction, and the pyruvate is formed at the N-terminus of the alpha chain, which is derived from the carboxyl end of the proenzyme. The autoendoproteolytic cleavage occurs by a canonical serine protease mechanism, in which the side chain hydroxyl group of the serine supplies its oxygen atom to form the C-terminus of the beta chain, while the remainder of the serine residue undergoes an oxidative deamination to produce ammonia and the pyruvoyl prosthetic group on the alpha chain. During this reaction, the Ser that is part of the protease active site of the proenzyme becomes the pyruvoyl prosthetic group, which constitutes an essential element of the active site of the mature decarboxylase.

Its subcellular location is the cell membrane. It catalyses the reaction a 1,2-diacyl-sn-glycero-3-phospho-L-serine + H(+) = a 1,2-diacyl-sn-glycero-3-phosphoethanolamine + CO2. The protein operates within phospholipid metabolism; phosphatidylethanolamine biosynthesis; phosphatidylethanolamine from CDP-diacylglycerol: step 2/2. In terms of biological role, catalyzes the formation of phosphatidylethanolamine (PtdEtn) from phosphatidylserine (PtdSer). The sequence is that of Phosphatidylserine decarboxylase proenzyme from Nitrosococcus oceani (strain ATCC 19707 / BCRC 17464 / JCM 30415 / NCIMB 11848 / C-107).